We begin with the raw amino-acid sequence, 138 residues long: Small ribosomal subunit protein uS11c (138 aa).

Residues 1 to 24 (MAKSPPRSGSRRPGRIGSRKSGRR) are disordered. Positions 9–24 (GSRRPGRIGSRKSGRR) are enriched in basic residues.

This sequence belongs to the universal ribosomal protein uS11 family. In terms of assembly, part of the 30S ribosomal subunit.

It localises to the plastid. The protein resides in the chloroplast. In Citrus sinensis (Sweet orange), this protein is Small ribosomal subunit protein uS11c.